Here is a 236-residue protein sequence, read N- to C-terminus: Small ribosomal subunit protein uS2c (236 aa).

The protein belongs to the universal ribosomal protein uS2 family.

The protein resides in the plastid. It is found in the chloroplast. The polypeptide is Small ribosomal subunit protein uS2c (rps2) (Guizotia abyssinica (Niger)).